The following is a 111-amino-acid chain: Probable 4-amino-4-deoxy-L-arabinose-phosphoundecaprenol flippase subunit ArnE (111 aa).

Transmembrane regions (helical) follow at residues 36 to 56 (IVLW…LWLL), 61 to 81 (VPVG…TLAA), and 88 to 108 (PVSP…VILG). The region spanning 40-109 (LGLALACIGL…IIGGIVILGS (70 aa)) is the EamA domain.

The protein belongs to the ArnE family. Heterodimer of ArnE and ArnF.

The protein resides in the cell inner membrane. The protein operates within bacterial outer membrane biogenesis; lipopolysaccharide biosynthesis. Its function is as follows. Translocates 4-amino-4-deoxy-L-arabinose-phosphoundecaprenol (alpha-L-Ara4N-phosphoundecaprenol) from the cytoplasmic to the periplasmic side of the inner membrane. The chain is Probable 4-amino-4-deoxy-L-arabinose-phosphoundecaprenol flippase subunit ArnE from Shigella flexneri serotype 5b (strain 8401).